Reading from the N-terminus, the 505-residue chain is MVSIRPDEISAILKQQISDYDKSVSVSNVGTVLQIGDGIARVYGLEQVMAGELVEFEDGTEGIALNLEDDNVGAVLMGEGVGIQEGSTVKATGKIASVPVSDEMLGRVVTPLGQPMDGKGDIPSTESRLIESIAPGIIKRKSVHEPLQTGITSIDSMIPIGRGQRELIIGDRQTGKTAIAIDTIINQKGEDVVCVYVAVGQKAASVANVVEVLREKGALDYTVIVAASASDPAALQYLAPYTGAAIAESFMYKGKATLVIYDDLTKQAQAYRQMSLLLRRPPGREAYPGDVFYLHSRLLERAAKLSDAMGSGSMTALPIIETQAGDVSAYIPTNVISITDGQIFLSSDLFNSGLRPAINVGISVSRVGGAAQTKAIKKIAGTLKLELAQFDELAAFSQFASDLDEATQKQLGRGKRLRELLKQPQFAPLNLAEQVAIVYAGVKGLIDEVPEDQVTQFSRELRDYLKTNKPEYITKVQTEKVLNEDAETILKAAINEVKSSMLASA.

170 to 177 (GDRQTGKT) lines the ATP pocket.

This sequence belongs to the ATPase alpha/beta chains family. As to quaternary structure, F-type ATPases have 2 components, CF(1) - the catalytic core - and CF(0) - the membrane proton channel. CF(1) has five subunits: alpha(3), beta(3), gamma(1), delta(1), epsilon(1). CF(0) has four main subunits: a(1), b(1), b'(1) and c(9-12).

The protein resides in the cellular thylakoid membrane. The enzyme catalyses ATP + H2O + 4 H(+)(in) = ADP + phosphate + 5 H(+)(out). Produces ATP from ADP in the presence of a proton gradient across the membrane. The alpha chain is a regulatory subunit. In Prochlorococcus marinus (strain MIT 9313), this protein is ATP synthase subunit alpha.